A 163-amino-acid chain; its full sequence is PTS system fructose-specific EIIB component (163 aa).

The 163-residue stretch at 1-163 (MMNIVLARID…FVQILRNVTK (163 aa)) folds into the PTS EIIB type-4 domain. His15 serves as the catalytic Pros-phosphohistidine intermediate. The residue at position 15 (His15) is a Phosphohistidine; by EIIA.

The protein resides in the cytoplasm. The catalysed reaction is D-fructose(out) + N(pros)-phospho-L-histidyl-[protein] = D-fructose 1-phosphate(in) + L-histidyl-[protein]. Its function is as follows. The phosphoenolpyruvate-dependent sugar phosphotransferase system (sugar PTS), a major carbohydrate active -transport system, catalyzes the phosphorylation of incoming sugar substrates concomitantly with their translocation across the cell membrane. The enzyme II LevDE PTS system is involved in fructose transport. LevD and LevE act as negative regulators of the levanase operon. They may be involved in a PTS-mediated phosphorylation of a regulator. The sequence is that of PTS system fructose-specific EIIB component from Bacillus subtilis (strain 168).